A 498-amino-acid polypeptide reads, in one-letter code: Ribosomal RNA small subunit methyltransferase G 2 (498 aa).

Positions 1–230 are methyltransferase G; that stretch reads MRNGTIRYPG…FQRLGPPTRI (230 aa). S-adenosyl-L-methionine contacts are provided by Gly89, Met94, and Arg154. The methyltransferase TrmH family stretch occupies residues 231 to 498; sequence RKETAMKRHG…SQTKHSPAPA (268 aa).

This sequence in the N-terminal section; belongs to the methyltransferase superfamily. RNA methyltransferase RsmG family. The protein in the C-terminal section; belongs to the class IV-like SAM-binding methyltransferase superfamily. RNA methyltransferase TrmH family.

Its subcellular location is the cytoplasm. It carries out the reaction guanosine(527) in 16S rRNA + S-adenosyl-L-methionine = N(7)-methylguanosine(527) in 16S rRNA + S-adenosyl-L-homocysteine. Its function is as follows. Specifically methylates the N7 position of guanine in position 527 of 16S rRNA. The polypeptide is Ribosomal RNA small subunit methyltransferase G 2 (rsmG2) (Syntrophobacter fumaroxidans (strain DSM 10017 / MPOB)).